A 303-amino-acid polypeptide reads, in one-letter code: Protoheme IX farnesyltransferase (303 aa).

6 consecutive transmembrane segments (helical) span residues 25 to 45 (MGLV…AIVM), 54 to 74 (IPQI…ACAL), 118 to 138 (CLFL…VGYV), 166 to 186 (IGWV…FLVV), 230 to 250 (LVLL…FVVI), and 280 to 300 (FVYS…VSLI).

This sequence belongs to the UbiA prenyltransferase family. Protoheme IX farnesyltransferase subfamily. Interacts with CtaA.

The protein localises to the cell membrane. It carries out the reaction heme b + (2E,6E)-farnesyl diphosphate + H2O = Fe(II)-heme o + diphosphate. It participates in porphyrin-containing compound metabolism; heme O biosynthesis; heme O from protoheme: step 1/1. Converts heme B (protoheme IX) to heme O by substitution of the vinyl group on carbon 2 of heme B porphyrin ring with a hydroxyethyl farnesyl side group. The polypeptide is Protoheme IX farnesyltransferase (Staphylococcus epidermidis (strain ATCC 35984 / DSM 28319 / BCRC 17069 / CCUG 31568 / BM 3577 / RP62A)).